The following is a 210-amino-acid chain: Small ribosomal subunit protein uS3 (210 aa).

One can recognise a KH type-2 domain in the interval 38–106 (LRSFLKKRLY…EVYLNIQEVR (69 aa)).

This sequence belongs to the universal ribosomal protein uS3 family. As to quaternary structure, part of the 30S ribosomal subunit. Forms a tight complex with proteins S10 and S14.

Functionally, binds the lower part of the 30S subunit head. Binds mRNA in the 70S ribosome, positioning it for translation. The protein is Small ribosomal subunit protein uS3 of Geotalea uraniireducens (strain Rf4) (Geobacter uraniireducens).